A 150-amino-acid polypeptide reads, in one-letter code: 3-hydroxyacyl-[acyl-carrier-protein] dehydratase FabZ (150 aa).

Histidine 52 is an active-site residue.

It belongs to the thioester dehydratase family. FabZ subfamily.

It localises to the cytoplasm. It carries out the reaction a (3R)-hydroxyacyl-[ACP] = a (2E)-enoyl-[ACP] + H2O. Functionally, involved in unsaturated fatty acids biosynthesis. Catalyzes the dehydration of short chain beta-hydroxyacyl-ACPs and long chain saturated and unsaturated beta-hydroxyacyl-ACPs. The polypeptide is 3-hydroxyacyl-[acyl-carrier-protein] dehydratase FabZ (Albidiferax ferrireducens (strain ATCC BAA-621 / DSM 15236 / T118) (Rhodoferax ferrireducens)).